Reading from the N-terminus, the 173-residue chain is Translation initiation factor IF-3 (173 aa).

It belongs to the IF-3 family. As to quaternary structure, monomer.

The protein localises to the cytoplasm. In terms of biological role, IF-3 binds to the 30S ribosomal subunit and shifts the equilibrium between 70S ribosomes and their 50S and 30S subunits in favor of the free subunits, thus enhancing the availability of 30S subunits on which protein synthesis initiation begins. The protein is Translation initiation factor IF-3 of Methylorubrum populi (strain ATCC BAA-705 / NCIMB 13946 / BJ001) (Methylobacterium populi).